The sequence spans 415 residues: Multidrug resistance protein MdtA (415 aa).

The first 21 residues, 1 to 21, serve as a signal peptide directing secretion; sequence MKGSYKSRWVIVIVVVIAAIA. Residues 31–46 show a composition bias toward polar residues; it reads DSQSAAPGATKQAQQS. Disordered regions lie at residues 31-56 and 392-415; these read DSQSAAPGATKQAQQSPAGGRRGMRA and EAQSATTPEEKATSREYAKKGARS. Residues 399–415 are compositionally biased toward basic and acidic residues; that stretch reads PEEKATSREYAKKGARS.

Belongs to the membrane fusion protein (MFP) (TC 8.A.1) family. In terms of assembly, part of a tripartite efflux system composed of MdtA, MdtB and MdtC.

Its subcellular location is the cell inner membrane. Functionally, the MdtABC tripartite complex confers resistance against novobiocin and deoxycholate. This Escherichia coli O6:K15:H31 (strain 536 / UPEC) protein is Multidrug resistance protein MdtA.